A 481-amino-acid chain; its full sequence is GTPase Obg (481 aa).

An Obg domain is found at 2–159; the sequence is TTFVDRVVLH…IDVVLELKSV (158 aa). An OBG-type G domain is found at 160–330; it reads ADVGLVGYPS…LMYAMGELVT (171 aa). Residues 166 to 173, 191 to 195, 212 to 215, 282 to 285, and 311 to 313 contribute to the GTP site; these read GYPSAGKS, FTTLV, DVPG, NKVD, and SAA. Mg(2+)-binding residues include serine 173 and threonine 193. The region spanning 348 to 426 is the OCT domain; it reads PKAVDDAGFT…IGEREFDWQP (79 aa). Positions 439-452 are enriched in basic and acidic residues; it reads GDQRLAEKSERPSA. Residues 439 to 481 are disordered; the sequence is GDQRLAEKSERPSATERLAARKARRQRPEDEAEADEPVGDGEE. Acidic residues predominate over residues 468 to 481; the sequence is DEAEADEPVGDGEE.

It belongs to the TRAFAC class OBG-HflX-like GTPase superfamily. OBG GTPase family. As to quaternary structure, monomer. The cofactor is Mg(2+).

It localises to the cytoplasm. In terms of biological role, an essential GTPase which binds GTP, GDP and possibly (p)ppGpp with moderate affinity, with high nucleotide exchange rates and a fairly low GTP hydrolysis rate. Plays a role in control of the cell cycle, stress response, ribosome biogenesis and in those bacteria that undergo differentiation, in morphogenesis control. The protein is GTPase Obg of Salinispora tropica (strain ATCC BAA-916 / DSM 44818 / JCM 13857 / NBRC 105044 / CNB-440).